Here is a 123-residue protein sequence, read N- to C-terminus: Cholecystokinin A (123 aa).

An N-terminal signal peptide occupies residues 1–20 (MYSGICICLLLAMLSASSKA). A propeptide spanning residues 21 to 103 (HQSEDAVVTE…FDQPHRINDR (83 aa)) is cleaved from the precursor. Residue Tyr-105 is modified to Sulfotyrosine. Phenylalanine amide is present on Phe-111. Positions 115–123 (SAEEYEYSS) are excised as a propeptide.

This sequence belongs to the gastrin/cholecystokinin family. The precursor is cleaved by proteases to produce a number of active cholecystokinins. In terms of tissue distribution, brain, gastrointestinal tract and lung.

The protein resides in the secreted. The sequence is that of Cholecystokinin A (cck-a) from Xenopus laevis (African clawed frog).